A 1435-amino-acid chain; its full sequence is Cardiac-enriched FHL2-interacting protein (1435 aa).

Disordered regions lie at residues 109–176 (EEKY…PPKF), 203–234 (SNTH…GSSS), 250–270 (FPSP…GTFL), and 291–311 (KDTA…DTTL). Residue Thr-120 is modified to Phosphothreonine. The segment covering 133 to 147 (LRSSNKPVSKVSTLI) has biased composition (polar residues). Residues 149–160 (SFDRTESQRCES) are compositionally biased toward basic and acidic residues. Phosphoserine is present on Ser-323. Disordered regions lie at residues 362–592 (EGKA…LTLS), 609–772 (AERS…EKEN), 795–847 (SQGE…SPSS), 1007–1108 (PEGD…ARVT), 1138–1261 (SPRG…PGGP), and 1363–1435 (QGPR…EGIS). Basic and acidic residues predominate over residues 389–402 (KGKESLQDTLEEKT). Ser-470 is modified (phosphoserine). Basic and acidic residues-rich tracts occupy residues 479–493 (QEKE…DSYK), 522–535 (VLDE…DGKQ), 609–620 (AERSSYENKEVE), and 650–667 (CNRD…KTHQ). The span at 668-679 (LENGLSRSVSQE) shows a compositional bias: polar residues. Residues 727 to 741 (KFSTSSSDQSFASFD) are compositionally biased toward low complexity. Residues 751–772 (NQREDRRKDVSAGDSQKDEKEN) are compositionally biased toward basic and acidic residues. Residue Ser-816 is modified to Phosphoserine. The span at 831-847 (KGTTFSQAKDLTPSPSS) shows a compositional bias: polar residues. The span at 1055-1066 (NSPNPGSPGESS) shows a compositional bias: low complexity. A compositionally biased stretch (polar residues) spans 1067–1082 (ACSPAASNIWEESSQA). Positions 1083–1093 (PGGPELLPEEP) are enriched in low complexity. Positions 1094-1105 (NQASPWASSSPA) are enriched in polar residues. Over residues 1182–1193 (RRAKKLASKRRK) the composition is skewed to basic residues. Residues 1194 to 1211 (TDQAQEKHGESQEGKPCP) show a composition bias toward basic and acidic residues. Positions 1424 to 1435 (DDLEDFATEGIS) are enriched in acidic residues.

Interacts with FHL2. Expressed in the heart and skeletal muscle.

Its subcellular location is the cytoplasm. It is found in the myofibril. The protein localises to the sarcomere. The protein resides in the z line. Plays an important role in cardiomyocyte hypertrophy via activation of the calcineurin/NFAT signaling pathway. In Homo sapiens (Human), this protein is Cardiac-enriched FHL2-interacting protein.